The chain runs to 408 residues: Glucose-1-phosphate adenylyltransferase (408 aa).

Alpha-D-glucose 1-phosphate is bound by residues Tyr100, Gly165, Glu180 to Lys181, and Ser198.

The protein belongs to the bacterial/plant glucose-1-phosphate adenylyltransferase family. As to quaternary structure, homotetramer.

It catalyses the reaction alpha-D-glucose 1-phosphate + ATP + H(+) = ADP-alpha-D-glucose + diphosphate. The protein operates within glycan biosynthesis; glycogen biosynthesis. Involved in the biosynthesis of ADP-glucose, a building block required for the elongation reactions to produce glycogen. Catalyzes the reaction between ATP and alpha-D-glucose 1-phosphate (G1P) to produce pyrophosphate and ADP-Glc. This is Glucose-1-phosphate adenylyltransferase from Cutibacterium acnes (strain DSM 16379 / KPA171202) (Propionibacterium acnes).